The sequence spans 346 residues: Uroporphyrinogen decarboxylase (346 aa).

Substrate is bound by residues 26–30 (RQAGR), D76, Y153, S208, and H323.

Belongs to the uroporphyrinogen decarboxylase family. As to quaternary structure, homodimer.

The protein localises to the cytoplasm. The enzyme catalyses uroporphyrinogen III + 4 H(+) = coproporphyrinogen III + 4 CO2. It functions in the pathway porphyrin-containing compound metabolism; protoporphyrin-IX biosynthesis; coproporphyrinogen-III from 5-aminolevulinate: step 4/4. Catalyzes the decarboxylation of four acetate groups of uroporphyrinogen-III to yield coproporphyrinogen-III. The sequence is that of Uroporphyrinogen decarboxylase from Prochlorococcus marinus (strain AS9601).